The primary structure comprises 1343 residues: DNA-directed RNA polymerase subunit beta (1343 aa).

Belongs to the RNA polymerase beta chain family. In terms of assembly, the RNAP catalytic core consists of 2 alpha, 1 beta, 1 beta' and 1 omega subunit. When a sigma factor is associated with the core the holoenzyme is formed, which can initiate transcription.

It catalyses the reaction RNA(n) + a ribonucleoside 5'-triphosphate = RNA(n+1) + diphosphate. Its function is as follows. DNA-dependent RNA polymerase catalyzes the transcription of DNA into RNA using the four ribonucleoside triphosphates as substrates. The polypeptide is DNA-directed RNA polymerase subunit beta (Haemophilus influenzae (strain PittGG)).